The chain runs to 403 residues: Argininosuccinate synthase (403 aa).

Residue alanine 10–serine 18 coordinates ATP. An L-citrulline-binding site is contributed by tyrosine 87. Position 117 (glycine 117) interacts with ATP. The L-aspartate site is built by threonine 119, asparagine 123, and aspartate 124. Asparagine 123 lines the L-citrulline pocket. L-citrulline is bound by residues arginine 127, serine 175, serine 184, glutamate 260, and tyrosine 272.

Belongs to the argininosuccinate synthase family. Type 1 subfamily. In terms of assembly, homotetramer.

It localises to the cytoplasm. The catalysed reaction is L-citrulline + L-aspartate + ATP = 2-(N(omega)-L-arginino)succinate + AMP + diphosphate + H(+). The protein operates within amino-acid biosynthesis; L-arginine biosynthesis; L-arginine from L-ornithine and carbamoyl phosphate: step 2/3. The sequence is that of Argininosuccinate synthase from Bacillus pumilus (strain SAFR-032).